A 330-amino-acid chain; its full sequence is Succinoglycan biosynthesis protein ExoA (330 aa).

Helical transmembrane passes span A116–F136, I260–W280, and Y299–W319.

This sequence belongs to the glycosyltransferase 2 family.

Its subcellular location is the cell membrane. It functions in the pathway glycan metabolism; exopolysaccharide biosynthesis. In terms of biological role, glycosyltransferase required for the synthesis of succinoglycan (EPS I). Needed for the addition of the second sugar (glucose). Catalyzes the formation of a beta-1,3 linkage with the galactose lipid carrier. In Rhizobium meliloti (strain 1021) (Ensifer meliloti), this protein is Succinoglycan biosynthesis protein ExoA (exoA).